The sequence spans 368 residues: DNA replication and repair protein RecF (368 aa).

Position 30 to 37 (30 to 37) interacts with ATP; that stretch reads GDNGAGKT.

This sequence belongs to the RecF family.

The protein resides in the cytoplasm. Functionally, the RecF protein is involved in DNA metabolism; it is required for DNA replication and normal SOS inducibility. RecF binds preferentially to single-stranded, linear DNA. It also seems to bind ATP. The sequence is that of DNA replication and repair protein RecF from Xanthomonas axonopodis pv. citri (strain 306).